We begin with the raw amino-acid sequence, 382 residues long: Glutamyl-tRNA reductase (382 aa).

Residues 38-41, S85, 90-92, and Q96 each bind substrate; these read TCNR and ENQ. The active-site Nucleophile is the C39. Residue 164–169 coordinates NADP(+); it reads GAGEMG.

The protein belongs to the glutamyl-tRNA reductase family. In terms of assembly, homodimer.

It catalyses the reaction (S)-4-amino-5-oxopentanoate + tRNA(Glu) + NADP(+) = L-glutamyl-tRNA(Glu) + NADPH + H(+). The protein operates within porphyrin-containing compound metabolism; protoporphyrin-IX biosynthesis; 5-aminolevulinate from L-glutamyl-tRNA(Glu): step 1/2. Catalyzes the NADPH-dependent reduction of glutamyl-tRNA(Glu) to glutamate 1-semialdehyde (GSA). The chain is Glutamyl-tRNA reductase from Methanococcus maripaludis (strain C6 / ATCC BAA-1332).